A 354-amino-acid chain; its full sequence is MALNHTALPQDERLPHYLRDGDPFASKLSWEADLVAGFYLTIIGILSTFGNGYVLYMSSRRKKKLRPAEIMTINLAVCDLGISVVGKPFTIISCFCHRWVFGWIGCRWYGWAGFFFGCGSLITMTAVSLDRYLKICYLSYGVWLKRKHAYICLAAIWAYASFWTTMPLVGLGDYVPEPFGTSCTLDWWLAQASVGGQVFILNILFFCLLLPTAVIVFSYVKIIAKVKSSSKEVAHFDSRIHSSHVLEMKLTKVAMLICAGFLIAWIPYAVVSVWSAFGRPDSIPIQLSVVPTLLAKSAAMYNPIIYQVIDYKFACCQTGGLKATKKKSLEGFRLHTVTTVRKSSAVLEIHEEWE.

Over 1-33 (MALNHTALPQDERLPHYLRDGDPFASKLSWEAD) the chain is Extracellular. Asn4 carries N-linked (GlcNAc...) asparagine glycosylation. The helical transmembrane segment at 34-54 (LVAGFYLTIIGILSTFGNGYV) threads the bilayer. At 55–74 (LYMSSRRKKKLRPAEIMTIN) the chain is on the cytoplasmic side. A helical membrane pass occupies residues 75 to 95 (LAVCDLGISVVGKPFTIISCF). The Extracellular segment spans residues 96–108 (CHRWVFGWIGCRW). Cysteines 106 and 183 form a disulfide. A helical membrane pass occupies residues 109-129 (YGWAGFFFGCGSLITMTAVSL). Topologically, residues 130–150 (DRYLKICYLSYGVWLKRKHAY) are cytoplasmic. Residues 151 to 171 (ICLAAIWAYASFWTTMPLVGL) traverse the membrane as a helical segment. Residues 172-197 (GDYVPEPFGTSCTLDWWLAQASVGGQ) lie on the Extracellular side of the membrane. The helical transmembrane segment at 198 to 218 (VFILNILFFCLLLPTAVIVFS) threads the bilayer. Topologically, residues 219–252 (YVKIIAKVKSSSKEVAHFDSRIHSSHVLEMKLTK) are cytoplasmic. A helical membrane pass occupies residues 253-273 (VAMLICAGFLIAWIPYAVVSV). The Extracellular portion of the chain corresponds to 274 to 288 (WSAFGRPDSIPIQLS). A helical membrane pass occupies residues 289–309 (VVPTLLAKSAAMYNPIIYQVI). Residue Lys296 is modified to N6-(retinylidene)lysine. At 310–353 (DYKFACCQTGGLKATKKKSLEGFRLHTVTTVRKSSAVLEIHEEW) the chain is on the cytoplasmic side. Residues Cys315 and Cys316 are each lipidated (S-palmitoyl cysteine).

The protein belongs to the G-protein coupled receptor 1 family. Opsin subfamily. It is uncertain whether Cys-315 or Cys-316 is palmitoylated. Detected in brain and retina and cell lines derived from neural retina.

The protein resides in the cell membrane. Functionally, G-protein coupled receptor which selectively activates G(i) type G proteins via ultraviolet A (UVA) light-mediated activation in the retina. Preferentially binds the chromophore 11-cis retinal and is a bistable protein that displays emission peaks at 380 nm (UVA light) and 470 nm (blue light). Required for the light-response in the inner plexiform layer, and contributes to the regulation of the light-response in the nerve fiber layer, via phosphorylated DAT/SLC6A3 dopamine uptake. Involved in local corneal and retinal circadian rhythm photoentrainment via modulation of the UVA light-induced phase-shift of the retina clock. Acts as a circadian photoreceptor in the outer ear, via modulation of circadian clock-gene expression in response to violet light during the light-to-dark transition phase and night phase of the circadian cycle. Required in the retina to negatively regulate hyaloid vessel regression during postnatal development via light-dependent OPN5-SLC32A1-DRD2-VEGFR2 signaling. Involved in the light-dependent regulation of retina and vitreous compartment dopamine levels. The sequence is that of Opsin-5 (OPN5) from Homo sapiens (Human).